Here is a 144-residue protein sequence, read N- to C-terminus: Large ribosomal subunit protein uL16 (144 aa).

This sequence belongs to the universal ribosomal protein uL16 family. Part of the 50S ribosomal subunit.

Functionally, binds 23S rRNA and is also seen to make contacts with the A and possibly P site tRNAs. This Thermoanaerobacter sp. (strain X514) protein is Large ribosomal subunit protein uL16.